The following is a 35-amino-acid chain: Photosystem II reaction center protein T (35 aa).

The helical transmembrane segment at 3–23 threads the bilayer; that stretch reads ALVYTFLLVSTLGIIFFAIFF.

It belongs to the PsbT family. PSII is composed of 1 copy each of membrane proteins PsbA, PsbB, PsbC, PsbD, PsbE, PsbF, PsbH, PsbI, PsbJ, PsbK, PsbL, PsbM, PsbT, PsbY, PsbZ, Psb30/Ycf12, at least 3 peripheral proteins of the oxygen-evolving complex and a large number of cofactors. It forms dimeric complexes.

It is found in the plastid. The protein localises to the chloroplast thylakoid membrane. Found at the monomer-monomer interface of the photosystem II (PS II) dimer, plays a role in assembly and dimerization of PSII. PSII is a light-driven water plastoquinone oxidoreductase, using light energy to abstract electrons from H(2)O, generating a proton gradient subsequently used for ATP formation. The protein is Photosystem II reaction center protein T of Bassia hyssopifolia (Fivehorn smotherweed).